The chain runs to 654 residues: Endoplasmic reticulum chaperone BiP (654 aa).

A signal peptide spans 1–18 (MKFTVVAAALLLLCAVRA). The tract at residues 1 to 80 (MKFTVVAAAL…EGERLIGDAA (80 aa)) is required for interaction with ELAPOR1. Position 36–39 (36–39 (GTTY)) interacts with ATP. Serine 86 is modified (phosphoserine). An ATP-binding site is contributed by lysine 96. Position 125 is an N6-acetyllysine (lysine 125). Residues 125 to 280 (KPYIQVDIGG…KKKTGKDVRK (156 aa)) are nucleotide-binding (NBD). Position 160 is a 3'-nitrotyrosine (tyrosine 160). Position 213 is an N6-acetyllysine (lysine 213). 227–229 (GGT) contacts ATP. Lysine 271 is modified (N6-acetyllysine). 293-300 (EKAKRALS) is a binding site for ATP. An N6-acetyllysine modification is found at lysine 326. Lysine 352 is covalently cross-linked (Glycyl lysine isopeptide (Lys-Gly) (interchain with G-Cter in SUMO2)). Lysine 353 is modified (N6-acetyllysine; alternate). Lysine 353 participates in a covalent cross-link: Glycyl lysine isopeptide (Lys-Gly) (interchain with G-Cter in SUMO1); alternate. Residue 364 to 367 (GSTR) participates in ATP binding. The interval 409–419 (QDTGDLVLLDV) is interdomain linker. The interval 420–500 (CPLTLGIETV…PRGVPQIEVT (81 aa)) is substrate-binding (SBD). Lysine 447 carries the post-translational modification N6-succinyllysine. An Omega-N-methylarginine modification is found at arginine 492. Threonine 518 bears the O-AMP-threonine; alternate mark. Threonine 518 carries the phosphothreonine; alternate modification. Lysine 585 carries the N6,N6,N6-trimethyllysine; by METTL21A; in vitro modification. Lysine 585 bears the N6,N6-dimethyllysine; alternate mark. Lysine 585 is subject to N6-methyllysine; alternate. The residue at position 591 (lysine 591) is an N6-methyllysine. A disordered region spans residues 631-654 (ISKLYGSGGPPPTGEEDTSEKDEL). Phosphothreonine is present on residues threonine 643 and threonine 648. The segment covering 644–654 (GEEDTSEKDEL) has biased composition (acidic residues). Residue serine 649 is modified to Phosphoserine. Positions 651–654 (KDEL) match the Prevents secretion from ER motif.

Belongs to the heat shock protein 70 family. As to quaternary structure, monomer and homooligomer; homooligomerization via the interdomain linker inactivates the chaperone activity and acts as a storage of HSPA5/BiP molecules. Interacts with DNAJC1 (via J domain). Component of an EIF2 complex at least composed of CELF1/CUGBP1, CALR, CALR3, EIF2S1, EIF2S2, HSP90B1 and HSPA5. Part of a large chaperone multiprotein complex comprising DNAJB11, HSP90B1, HSPA5, HYOU, PDIA2, PDIA4, PDIA6, PPIB, SDF2L1, UGGT1 and very small amounts of ERP29, but not, or at very low levels, CALR nor CANX. Interacts with TMEM132A and TRIM21. May form a complex with ERLEC1, OS9, SEL1L and SYVN1. Interacts with DNAJC10. Interacts with DNAJB9/ERdj4; leading to recruit HSPA5/BiP to ERN1/IRE1. Interacts with ERN1/IRE1 (via luminal domain); the interaction takes place following interaction with DNAJB9/ERdj4 and leads to inactivate ERN1/IRE1, the interaction also competitively inhibits ERN1 interaction with MANF. Interacts directly with MANF (via SAP domain); the interaction inhibits ATP binding to HSPA5/BiP and subsequent nucleotide exchange. Interacts with EIF2AK3/PERK (via luminal domain); interaction leads to inactivate EIF2AK3/PERK. Interacts with MX1. Interacts with METTL23. Interacts with CEMIP; the interaction induces calcium leakage from the endoplasmic reticulum and cell migration. Interacts with PCSK4 form; the interaction takes place in the endoplasmic reticulum. Interacts with CIPC. Interacts with CCDC88B (via C-terminus); the interaction opposes ERN1-mediated JNK activation, protecting against apoptosis. Interacts with INPP5K; necessary for INPP5K localization at the endoplasmic reticulum. Interacts with MANF; the interaction is direct. Interacts with LOXL2; leading to activate the ERN1/IRE1-XBP1 pathway of the unfolded protein response. Interacts with CLU under stressed condition; interaction increases CLU protein stability; facilitates its retrotranslocation and redistribution to the mitochondria; cooperatively suppress stress-induced apoptosis by stabilizing mitochondrial membrane integrity. Interacts with CCDC47. Interacts with CLN3. Interacts with ELAPOR1; may regulate the function of HSPA5 in apoptosis and cell proliferation. Interacts with CASP7. Interacts with ILDR2; the interaction stabilizes ILDR2 expression. Interacts with ADAM7. Post-translationally, in unstressed cells, AMPylation at Thr-518 by FICD inactivates the chaperome activity: AMPylated form is locked in a relatively inert state and only weakly stimulated by J domain-containing proteins. In response to endoplasmic reticulum stress, de-AMPylation by the same protein, FICD, restores the chaperone activity.

Its subcellular location is the endoplasmic reticulum lumen. It localises to the melanosome. The protein localises to the cytoplasm. The protein resides in the cell surface. The catalysed reaction is ATP + H2O = ADP + phosphate + H(+). The chaperone activity is regulated by ATP-induced allosteric coupling of the nucleotide-binding (NBD) and substrate-binding (SBD) domains. In the ADP-bound and nucleotide-free (apo) states, the two domains have little interaction. In contrast, in the ATP-bound state the two domains are tightly coupled, which results in drastically accelerated kinetics in both binding and release of polypeptide substrates. J domain-containing co-chaperones (DNAJB9/ERdj4 or DNAJC10/ERdj5) stimulate the ATPase activity and are required for efficient substrate recognition by HSPA5/BiP. Homooligomerization inactivates participating HSPA5/BiP protomers and probably act as reservoirs to store HSPA5/BiP molecules when they are not needed by the cell. In terms of biological role, endoplasmic reticulum chaperone that plays a key role in protein folding and quality control in the endoplasmic reticulum lumen. Involved in the correct folding of proteins and degradation of misfolded proteins via its interaction with DNAJC10/ERdj5, probably to facilitate the release of DNAJC10/ERdj5 from its substrate. Acts as a key repressor of the EIF2AK3/PERK and ERN1/IRE1-mediated unfolded protein response (UPR). In the unstressed endoplasmic reticulum, recruited by DNAJB9/ERdj4 to the luminal region of ERN1/IRE1, leading to disrupt the dimerization of ERN1/IRE1, thereby inactivating ERN1/IRE1. Also binds and inactivates EIF2AK3/PERK in unstressed cells. Accumulation of misfolded protein in the endoplasmic reticulum causes release of HSPA5/BiP from ERN1/IRE1 and EIF2AK3/PERK, allowing their homodimerization and subsequent activation. Plays an auxiliary role in post-translational transport of small presecretory proteins across endoplasmic reticulum (ER). May function as an allosteric modulator for SEC61 channel-forming translocon complex, likely cooperating with SEC62 to enable the productive insertion of these precursors into SEC61 channel. Appears to specifically regulate translocation of precursors having inhibitory residues in their mature region that weaken channel gating. May also play a role in apoptosis and cell proliferation. The protein is Endoplasmic reticulum chaperone BiP of Rattus norvegicus (Rat).